We begin with the raw amino-acid sequence, 95 residues long: Cell division protein FtsB (95 aa).

Over 1–3 the chain is Cytoplasmic; sequence MRL. A helical transmembrane segment spans residues 4-21; it reads FILILSAILLLFQYDLWF. Residues 22–95 are Periplasmic-facing; the sequence is GKNGYLDYKE…RIAKENKDNR (74 aa). Residues 28–62 are a coiled coil; the sequence is DYKETAEEIAMHKAENTKLSQRNQVVAAEIRDLKD.

The protein belongs to the FtsB family. Part of a complex composed of FtsB, FtsL and FtsQ.

Its subcellular location is the cell inner membrane. Essential cell division protein. May link together the upstream cell division proteins, which are predominantly cytoplasmic, with the downstream cell division proteins, which are predominantly periplasmic. In Mannheimia succiniciproducens (strain KCTC 0769BP / MBEL55E), this protein is Cell division protein FtsB.